A 151-amino-acid chain; its full sequence is Large ribosomal subunit protein uL13 (151 aa).

Belongs to the universal ribosomal protein uL13 family. As to quaternary structure, part of the 50S ribosomal subunit.

Functionally, this protein is one of the early assembly proteins of the 50S ribosomal subunit, although it is not seen to bind rRNA by itself. It is important during the early stages of 50S assembly. The polypeptide is Large ribosomal subunit protein uL13 (Synechococcus elongatus (strain ATCC 33912 / PCC 7942 / FACHB-805) (Anacystis nidulans R2)).